A 466-amino-acid chain; its full sequence is Argininosuccinate lyase (466 aa).

Positions 27, 114, and 159 each coordinate 2-(N(omega)-L-arginino)succinate. Catalysis depends on His-160, which acts as the Proton acceptor. Ser-281 functions as the Proton donor in the catalytic mechanism. 4 residues coordinate 2-(N(omega)-L-arginino)succinate: Asn-289, Tyr-321, Gln-326, and Lys-329.

Belongs to the lyase 1 family. Argininosuccinate lyase subfamily. As to quaternary structure, homotetramer. As to expression, eye lens.

The enzyme catalyses 2-(N(omega)-L-arginino)succinate = fumarate + L-arginine. Its pathway is amino-acid biosynthesis; L-arginine biosynthesis; L-arginine from L-ornithine and carbamoyl phosphate: step 3/3. In terms of biological role, delta crystallin, the principal crystallin in embryonic lens, is found only in birds and reptiles. This protein may also function as an enzymatically active argininosuccinate lyase. The chain is Argininosuccinate lyase (ASL2) from Gallus gallus (Chicken).